The following is a 351-amino-acid chain: MPSLRAHVFRVPADGPDDVAGVEALFASGLQANNVVAVLGKTEGNGCVNDFTRGYATRSFETLFSRYGVDGVSIIMSGGTEGALSPHWTVFARETVETPGERALAIGVSRTPALPPEHLGRREQILLVAEGVKSAMRDAGIDDPADVHFVQIKCPLLTSRRIAEAEAAGRTVATHDTLKSMGLSRGASALGVAVALGEIDATSIGDADICTRFDLFSRCASTSSGGELTDHEIIVLGMSAKWSGPLSIDHAVMLDAIDAHSVRKARERLPENSRLAAVLAKAEPDPSGRIDGRRHTMLDDSDIAGTRHARAFVGGVLAGIFGITDLYVSGGAEHQGPPGGGPVAIIVEKEQ.

The segment at 1–96 (MPSLRAHVFR…HWTVFARETV (96 aa)) is RU A. Substrate is bound by residues Arg53 and 77–78 (SG). The tract at residues 103-240 (ALAIGVSRTP…HEIIVLGMSA (138 aa)) is RU B. The active site involves Lys153. Residues Arg185 and 223–224 (SS) contribute to the substrate site. Catalysis depends on Ser223, which acts as the Nucleophile. Positions 246–351 (LSIDHAVMLD…PVAIIVEKEQ (106 aa)) are RU C. Position 283 (Glu283) interacts with Mg(2+). Substrate-binding positions include Arg310 and 329 to 330 (SG). Ala332, Gln335, Gly336, Pro337, and Gly340 together coordinate Mg(2+).

This sequence belongs to the cyclic amide hydrolase (CyAH) family. As to quaternary structure, homotetramer.

The enzyme catalyses cyanurate + H2O = 1-carboxybiuret + H(+). The protein operates within xenobiotic degradation; atrazine degradation; biuret from cyanurate: step 1/1. With respect to regulation, inhibited by barbituric acid. Its function is as follows. Responsible for the hydrolysis of cyanuric acid, an intermediate formed during catabolism of s-triazine based compounds in herbicides such as atrazine and polymers such as melamine. Catalyzes the hydrolytic opening of the s-triazine ring of cyanuric acid (2,4,6-trihydroxy-s-triazine) to yield carbon dioxide and carboxybiuret, which spontaneously decarboxylates to biuret. This is Cyanuric acid amidohydrolase from Rhizobium leguminosarum bv. trifolii (strain WSM1325).